The chain runs to 149 residues: Small ribosomal subunit protein bS16 (149 aa).

The tract at residues 115-149 is disordered; that stretch reads KLKAAKSEADAKAKAEAEAAATEEAPAEEPAAEAE. Positions 119–131 are enriched in basic and acidic residues; it reads AKSEADAKAKAEA. Acidic residues predominate over residues 139-149; sequence APAEEPAAEAE.

The protein belongs to the bacterial ribosomal protein bS16 family.

In Bifidobacterium adolescentis (strain ATCC 15703 / DSM 20083 / NCTC 11814 / E194a), this protein is Small ribosomal subunit protein bS16.